Reading from the N-terminus, the 282-residue chain is Probable endonuclease 4 (282 aa).

Zn(2+) contacts are provided by H70, H110, E146, D180, H183, H217, D230, H232, and E262.

It belongs to the AP endonuclease 2 family. The cofactor is Zn(2+).

The enzyme catalyses Endonucleolytic cleavage to 5'-phosphooligonucleotide end-products.. Endonuclease IV plays a role in DNA repair. It cleaves phosphodiester bonds at apurinic or apyrimidinic (AP) sites, generating a 3'-hydroxyl group and a 5'-terminal sugar phosphate. This Wolinella succinogenes (strain ATCC 29543 / DSM 1740 / CCUG 13145 / JCM 31913 / LMG 7466 / NCTC 11488 / FDC 602W) (Vibrio succinogenes) protein is Probable endonuclease 4.